We begin with the raw amino-acid sequence, 259 residues long: Ubiquinone/menaquinone biosynthesis C-methyltransferase UbiE (259 aa).

Residues T82, D103, 131–132, and S148 each bind S-adenosyl-L-methionine; that span reads NA.

This sequence belongs to the class I-like SAM-binding methyltransferase superfamily. MenG/UbiE family.

The enzyme catalyses a 2-demethylmenaquinol + S-adenosyl-L-methionine = a menaquinol + S-adenosyl-L-homocysteine + H(+). The catalysed reaction is a 2-methoxy-6-(all-trans-polyprenyl)benzene-1,4-diol + S-adenosyl-L-methionine = a 5-methoxy-2-methyl-3-(all-trans-polyprenyl)benzene-1,4-diol + S-adenosyl-L-homocysteine + H(+). The protein operates within quinol/quinone metabolism; menaquinone biosynthesis; menaquinol from 1,4-dihydroxy-2-naphthoate: step 2/2. It participates in cofactor biosynthesis; ubiquinone biosynthesis. Its function is as follows. Methyltransferase required for the conversion of demethylmenaquinol (DMKH2) to menaquinol (MKH2) and the conversion of 2-polyprenyl-6-methoxy-1,4-benzoquinol (DDMQH2) to 2-polyprenyl-3-methyl-6-methoxy-1,4-benzoquinol (DMQH2). This chain is Ubiquinone/menaquinone biosynthesis C-methyltransferase UbiE, found in Vibrio parahaemolyticus serotype O3:K6 (strain RIMD 2210633).